The sequence spans 378 residues: MASHSQVLVEEKSSVRILTFNRPKQLNALSFHMVSRLLQLFLAYEEDPSVKLVVLKGQGRAFSAGGDIPPIVRDILQGKLIRGAHYFKVGYTLNYVLSTYRKPQVSILNGIVMGGGAGLSTNGRFRIATENTVFAMPETALGLFPDVGASYFLSRLPGFFGEYVGLTGARLDGAEMLACGLATHFVPSISLTALEAELYKVGSSNQTFISTILDAYAEYPHLNQHSSYHRLDVIDRCFSKRTVEEIFSALEREVTQKPNDWLLATIQALEKASPSCLKISLRSIREGRLQGVGQCLIREYRMVCHVMKGDISKDFVEGCRAVLIDKDRNPKWQPRRLEDVTDSMVDQYFERVEDEEGWEDLKFPPRNNLPALAIAAKL.

3 residues coordinate substrate: G115, E138, and D146. Residues A376–L378 carry the Microbody targeting signal motif.

It belongs to the enoyl-CoA hydratase/isomerase family.

The protein resides in the peroxisome. The catalysed reaction is 3-hydroxy-2-methylpropanoyl-CoA + H2O = 3-hydroxy-2-methylpropanoate + CoA + H(+). It participates in amino-acid degradation; L-valine degradation. Functionally, involved in valine catabolism. In Arabidopsis thaliana (Mouse-ear cress), this protein is Probable 3-hydroxyisobutyryl-CoA hydrolase 2.